A 121-amino-acid polypeptide reads, in one-letter code: Small ribosomal subunit protein bS6 (121 aa).

The protein belongs to the bacterial ribosomal protein bS6 family.

Functionally, binds together with bS18 to 16S ribosomal RNA. This is Small ribosomal subunit protein bS6 from Pelagibacter ubique (strain HTCC1062).